The primary structure comprises 403 residues: MTMHQDHGVMKDLVKHPNEFPYLLQLAATTYGSPAAPIPKEPDRAFCYNTLHTVSKGFPRFVMRLPQELQDPICIFYLLLRALDTVEDDMNLKSETKISLLRVFHEHCSDRNWSMKSDYGIYADLMERFPLVVSVLEKLPPATQQTFRENVKYMGNGMADFIDKQILTVDEYDLYCHYVAGSCGIAVTKVIVQFNLATPEADSYDFSNSLGLLLQKANIITDYNEDINEEPRPRMFWPQEIWGKYAEKLADFNEPENIDTAVKCLNHMVTDAMRHIEPSLKGMVYFTDKTVFRALALLLVTAFGHLSTLYNNPNVFKEKVRQRKGRIARLVMSSRNVPGLFRTCLKLANNFESRCKQETANDPTVAMTIKRLQSIQATCRDGLAKYDTPSGLKSFCAAPTPTK.

Residues aspartate 84, glutamate 87, and aspartate 88 each contribute to the Mg(2+) site.

It belongs to the phytoene/squalene synthase family. Requires Mg(2+) as cofactor.

It catalyses the reaction 2 (2E,6E)-farnesyl diphosphate = presqualene diphosphate + diphosphate. Catalyzes the biosynthesis of presqualene diphosphate (PSPP). Works in combination with SSL-2 or SSL-3 to produce respectively squalene or botryococcene. In most other species, farnesyl diphosphate (FPP) is converted into squalene in a two-step reaction by a single enzyme. The chain is Presqualene diphosphate synthase (SSL-1) from Botryococcus braunii (Green alga).